The primary structure comprises 352 residues: UPF0324 membrane protein RA0957 (352 aa).

A run of 10 helical transmembrane segments spans residues 24 to 43 (VVSYFPGLAVAVLIAISAQF), 48 to 67 (YGAPATLMALLLGMSLNFLS), 104 to 126 (LGVSLLCLVTTALACTILFAIIV), 136 to 158 (LSLLTGGAVAICGASAAVALNAV), 169 to 191 (LALTIVAITLLSTSAMVLYPVLA), 201 to 223 (SGVFIGGTIHDVAQVVGAGFAMS), 235 to 257 (IVRVSLLAPTIIAVLIMVTVLGA), 272 to 294 (GFVLGFAFLAALKSMGFLPAAAG), 301 to 318 (SRWLLLIALGAVGLKTSV), and 328 to 350 (HVTLALLATAFLAAFIVVGLLWY).

The protein belongs to the UPF0324 family.

It is found in the cell membrane. The chain is UPF0324 membrane protein RA0957 from Rhizobium meliloti (strain 1021) (Ensifer meliloti).